The following is a 547-amino-acid chain: Chaperonin GroEL (547 aa).

Residues T30 to P33, K51, D87 to T91, G415, and D496 contribute to the ATP site. A disordered region spans residues E527–Y547. The segment covering G538–Y547 has biased composition (gly residues).

Belongs to the chaperonin (HSP60) family. As to quaternary structure, forms a cylinder of 14 subunits composed of two heptameric rings stacked back-to-back. Interacts with the co-chaperonin GroES.

It is found in the cytoplasm. The catalysed reaction is ATP + H2O + a folded polypeptide = ADP + phosphate + an unfolded polypeptide.. Together with its co-chaperonin GroES, plays an essential role in assisting protein folding. The GroEL-GroES system forms a nano-cage that allows encapsulation of the non-native substrate proteins and provides a physical environment optimized to promote and accelerate protein folding. The sequence is that of Chaperonin GroEL from Chlorobium phaeovibrioides (strain DSM 265 / 1930) (Prosthecochloris vibrioformis (strain DSM 265)).